The following is a 25-amino-acid chain: Gamma-conotoxin PiVIIA (25 aa).

3 disulfide bridges follow: Cys1–Cys15, Cys8–Cys19, and Cys14–Cys24. 4-hydroxyproline is present on Pro4. 4-carboxyglutamate is present on residues Glu13 and Glu20.

Belongs to the conotoxin O2 superfamily. As to expression, expressed by the venom duct.

The protein resides in the secreted. Its function is as follows. Micromolar concentrations of PiVIIA increase the magnitude of the macroscopic calcium current in DRG neurons from rat. An increase, even modest of the calcium current, may have a significant impact in the excitability and electrical activity of neurons, and may set up PiVIIA as a member of the pharmacological family of the gamma-conotoxins. The polypeptide is Gamma-conotoxin PiVIIA (Conus princeps (Prince cone)).